Consider the following 431-residue polypeptide: Asparagine--tRNA ligase 1 (431 aa).

This sequence belongs to the class-II aminoacyl-tRNA synthetase family. In terms of assembly, homodimer.

It is found in the cytoplasm. The catalysed reaction is tRNA(Asn) + L-asparagine + ATP = L-asparaginyl-tRNA(Asn) + AMP + diphosphate + H(+). This chain is Asparagine--tRNA ligase 1 (asnS1), found in Lactiplantibacillus plantarum (strain ATCC BAA-793 / NCIMB 8826 / WCFS1) (Lactobacillus plantarum).